We begin with the raw amino-acid sequence, 566 residues long: KsdD-like steroid dehydrogenase Rv0785 (566 aa).

23–54 (DAIVVGAGLAGLVAACELADRGLRVLILDQEN) contacts FAD.

It belongs to the FAD-dependent oxidoreductase 2 family. It depends on FAD as a cofactor.

The protein operates within lipid metabolism; steroid biosynthesis. Functionally, able to catalyze the elimination of the C-1 and C-2 hydrogen atoms of the A-ring from the polycyclic ring structure of 3-ketosteroids. The chain is KsdD-like steroid dehydrogenase Rv0785 from Mycobacterium tuberculosis (strain ATCC 25618 / H37Rv).